We begin with the raw amino-acid sequence, 209 residues long: uncharacterized protein (209 aa).

An FCP1 homology domain is found at 1–199; that stretch reads MQVFLDLDET…DELKRVTASL (199 aa).

This is an uncharacterized protein from Dryophytes versicolor (chameleon treefrog).